A 410-amino-acid polypeptide reads, in one-letter code: MKIMSVNSGSSSLKFQLLEMPQQEVIVSVLFERIGSNQAVLTMKTKDKKDKQVLEVPNHQTAVELLLDALIQKKVINALEEIEGVGHRVVQGGEIFSDSAVLTEKTLAQIESLCDLAPLHNPANIISIKAFQKVLPQTFQVAVFDTTFHQSMPAVNFLYATPYYWYQKYQIRKYGAHGTSYKYVTEQMQQILAKDNAKIIICHAGNGVSLCAVDSGKSVDTSMGFTPLEGVPMGTRSGNIDPAVVKFISEKENKTVACVIDDLNKKSGYLGVSGISNDTRDILASIKEGNQQAILSHDIQVKRIVDYIASYYVLLKGIDALVFTAGIGENSSFFRSEIIKRLSVLGIKLDEEKNKVKGKQELITTPDSTIKAFVIPTNEELAIAQDVLRLKQNKTNQYKDDQQECFCFCG.

Asparagine 7 contacts Mg(2+). ATP is bound at residue lysine 14. A substrate-binding site is contributed by arginine 88. Catalysis depends on aspartate 145, which acts as the Proton donor/acceptor. Residues histidine 203 to glycine 207, aspartate 278 to arginine 280, and glycine 326 to asparagine 330 contribute to the ATP site. Position 379 (glutamate 379) interacts with Mg(2+).

The protein belongs to the acetokinase family. In terms of assembly, homodimer. Requires Mg(2+) as cofactor. The cofactor is Mn(2+).

The protein resides in the cytoplasm. It carries out the reaction acetate + ATP = acetyl phosphate + ADP. Its pathway is metabolic intermediate biosynthesis; acetyl-CoA biosynthesis; acetyl-CoA from acetate: step 1/2. Catalyzes the formation of acetyl phosphate from acetate and ATP. Can also catalyze the reverse reaction. In Aster yellows witches'-broom phytoplasma (strain AYWB), this protein is Acetate kinase.